A 276-amino-acid chain; its full sequence is Putative translation initiation factor eIF-2B subunit 2-like (276 aa).

Belongs to the eIF-2B alpha/beta/delta subunits family. As to quaternary structure, complex of two different subunits.

Catalyzes the exchange of initiation factor 2-bound GDP for GTP. In Pyrococcus horikoshii (strain ATCC 700860 / DSM 12428 / JCM 9974 / NBRC 100139 / OT-3), this protein is Putative translation initiation factor eIF-2B subunit 2-like.